A 458-amino-acid chain; its full sequence is Phosphoglucosamine mutase (458 aa).

S108 (phosphoserine intermediate) is an active-site residue. Mg(2+) contacts are provided by S108, D247, D249, and D251. S108 bears the Phosphoserine mark.

The protein belongs to the phosphohexose mutase family. It depends on Mg(2+) as a cofactor. Activated by phosphorylation.

It carries out the reaction alpha-D-glucosamine 1-phosphate = D-glucosamine 6-phosphate. Its function is as follows. Catalyzes the conversion of glucosamine-6-phosphate to glucosamine-1-phosphate. The chain is Phosphoglucosamine mutase from Nitrosomonas europaea (strain ATCC 19718 / CIP 103999 / KCTC 2705 / NBRC 14298).